Consider the following 143-residue polypeptide: Small ribosomal subunit protein uS12 (143 aa).

Basic residues predominate over residues 1–20; the sequence is MGKPRGLRTARKHRSHRRDQ. Positions 1–26 are disordered; it reads MGKPRGLRTARKHRSHRRDQRWHDKD. P62 bears the Hydroxyproline mark.

Belongs to the universal ribosomal protein uS12 family. As to quaternary structure, component of the 40S small ribosomal subunit.

Its subcellular location is the cytoplasm. The protein resides in the cytosol. It is found in the rough endoplasmic reticulum. The polypeptide is Small ribosomal subunit protein uS12 (RpS23) (Dermacentor variabilis (American dog tick)).